The following is a 226-amino-acid chain: Ribonuclease 3 (226 aa).

The RNase III domain occupies 6-128; sequence INRLQRKLGY…LIGGVFLDSN (123 aa). Glu41 lines the Mg(2+) pocket. Residue Asp45 is part of the active site. Asp114 and Glu117 together coordinate Mg(2+). The active site involves Glu117. The region spanning 155–225 is the DRBM domain; the sequence is DPKTRLQEYL…AEQVLKKLEL (71 aa).

The protein belongs to the ribonuclease III family. Homodimer. Mg(2+) is required as a cofactor.

The protein localises to the cytoplasm. It carries out the reaction Endonucleolytic cleavage to 5'-phosphomonoester.. In terms of biological role, digests double-stranded RNA. Involved in the processing of primary rRNA transcript to yield the immediate precursors to the large and small rRNAs (23S and 16S). Processes some mRNAs, and tRNAs when they are encoded in the rRNA operon. Processes pre-crRNA and tracrRNA of type II CRISPR loci if present in the organism. The polypeptide is Ribonuclease 3 (Salmonella choleraesuis (strain SC-B67)).